The following is a 462-amino-acid chain: Cysteine--tRNA ligase (462 aa).

C30 is a binding site for Zn(2+). Residues 32-42 (PTVYDRAHLGN) carry the 'HIGH' region motif. Zn(2+)-binding residues include C221, H246, and E250. Residues 279 to 283 (KMSKS) carry the 'KMSKS' region motif. K282 contributes to the ATP binding site.

This sequence belongs to the class-I aminoacyl-tRNA synthetase family. In terms of assembly, monomer. Zn(2+) is required as a cofactor.

Its subcellular location is the cytoplasm. It catalyses the reaction tRNA(Cys) + L-cysteine + ATP = L-cysteinyl-tRNA(Cys) + AMP + diphosphate. This Paracoccus denitrificans (strain Pd 1222) protein is Cysteine--tRNA ligase.